Here is a 1147-residue protein sequence, read N- to C-terminus: MDEPPFSEAALEQALGEPCDLDAALLTDIEDMLQLINNQDSDFPGLFDPPYAGSGAGGTDPASPDTSSPGSLSPPPATLSSSLEAFLSGPQAAPSPLSPPQPAPTPLKMYPSMPAFSPGPGIKEESVPLSILQTPTPQPLPGALLPQSFPAPAPPQFSSTPVLGYPSPPGGFSTGSPPGNTQQPLPGLPLASPPGVPPVSLHTQVQSVVPQQLLTVTAAPTAAPVTTTVTSQIQQVPVLLQPHFIKADSLLLTAMKTDGATVKAAGLSPLVSGTTVQTGPLPTLVSGGTILATVPLVVDAEKLPINRLAAGSKAPASAQSRGEKRTAHNAIEKRYRSSINDKIIELKDLVVGTEAKLNKSAVLRKAIDYIRFLQHSNQKLKQENLSLRTAVHKSKSLKDLVSACGSGGNTDVLMEGVKTEVEDTLTPPPSDAGSPFQSSPLSLGSRGSGSGGSGSDSEPDSPVFEDSKAKPEQRPSLHSRGMLDRSRLALCTLVFLCLSCNPLASLLGARGLPSPSDTTSVYHSPGRNVLGTESRDGPGWAQWLLPPVVWLLNGLLVLVSLVLLFVYGEPVTRPHSGPAVYFWRHRKQADLDLARGDFAQAAQQLWLALRALGRPLPTSHLDLACSLLWNLIRHLLQRLWVGRWLAGRAGGLQQDCALRVDASASARDAALVYHKLHQLHTMGKHTGGHLTATNLALSALNLAECAGDAVSVATLAEIYVAAALRVKTSLPRALHFLTRFFLSSARQACLAQSGSVPPAMQWLCHPVGHRFFVDGDWSVLSTPWESLYSLAGNPVDPLAQVTQLFREHLLERALNCVTQPNPSPGSADGDKEFSDALGYLQLLNSCSDAAGAPAYSFSISSSMATTTGVDPVAKWWASLTAVVIHWLRRDEEAAERLCPLVEHLPRVLQESERPLPRAALHSFKAARALLGCAKAESGPASLTICEKASGYLQDSLATTPASSSIDKAVQLFLCDLLLVVRTSLWRQQQPPAPAPAAQGTSSRPQASALELRGFQRDLSSLRRLAQSFRPAMRRVFLHEATARLMAGASPTRTHQLLDRSLRRRAGPGGKGGAVAELEPRPTRREHAEALLLASCYLPPGFLSAPGQRVGMLAEAARTLEKLGDRRLLHDCQQMLMRLGGGTTVTSS.

The segment at 1–60 (MDEPPFSEAALEQALGEPCDLDAALLTDIEDMLQLINNQDSDFPGLFDPPYAGSGAGGTD) is transcriptional activation (acidic). Residues 1–487 (MDEPPFSEAA…HSRGMLDRSR (487 aa)) are Cytoplasmic-facing. Positions 27–35 (TDIEDMLQL) match the 9aaTAD motif. The tract at residues 39–193 (QDSDFPGLFD…PLPGLPLASP (155 aa)) is disordered. Composition is skewed to low complexity over residues 62-71 (ASPDTSSPGS) and 78-95 (TLSS…AAPS). Pro residues predominate over residues 96-105 (PLSPPQPAPT). Phosphoserine is present on residues Ser98 and Ser117. Residues 170-190 (GGFSTGSPPGNTQQPLPGLPL) are compositionally biased toward low complexity. Residues 234–497 (QQVPVLLQPH…LALCTLVFLC (264 aa)) form an interaction with LMNA region. One can recognise a bHLH domain in the interval 323 to 373 (EKRTAHNAIEKRYRSSINDKIIELKDLVVGTEAKLNKSAVLRKAIDYIRFL). Residues Ser337 and Ser338 each carry the phosphoserine; by SIK1 modification. Residues 373–394 (LQHSNQKLKQENLSLRTAVHKS) are leucine-zipper. Residue Ser396 is modified to Phosphoserine; by AMPK. Ser402 bears the Phosphoserine; by SIK1 mark. Residues 421-479 (VEDTLTPPPSDAGSPFQSSPLSLGSRGSGSGGSGSDSEPDSPVFEDSKAKPEQRPSLHS) are disordered. Ser457 is modified (phosphoserine). Residues 465–479 (EDSKAKPEQRPSLHS) show a composition bias toward basic and acidic residues. Residues 488-508 (LALCTLVFLCLSCNPLASLLG) form a helical membrane-spanning segment. The Lumenal segment spans residues 509–547 (ARGLPSPSDTTSVYHSPGRNVLGTESRDGPGWAQWLLPP). A helical transmembrane segment spans residues 548–568 (VVWLLNGLLVLVSLVLLFVYG). The Cytoplasmic segment spans residues 569–1147 (EPVTRPHSGP…LGGGTTVTSS (579 aa)). Ser1060 is subject to Phosphoserine.

The protein belongs to the SREBP family. In terms of assembly, forms a tight complex with SCAP, the SCAP-SREBP complex, in the endoplasmic reticulum membrane and the Golgi apparatus. Interacts with PAQR3; the interaction anchors the SCAP-SREBP complex to the Golgi apparatus in low cholesterol conditions. Efficient DNA binding of the soluble transcription factor fragment requires dimerization with another bHLH protein. Interacts with CEBPA, the interaction produces a transcriptional synergy. Interacts with LMNA. Post-translationally, processed in the Golgi apparatus, releasing the protein from the membrane. At low cholesterol the SCAP-SREBP complex is recruited into COPII vesicles for export from the endoplasmic reticulum. In the Golgi, complex SREBPs are cleaved sequentially by site-1 (MBTPS1, S1P) and site-2 (MBTPS2, S2P) protease. The first cleavage by site-1 protease occurs within the luminal loop, the second cleavage by site-2 protease occurs within the first transmembrane domain, releasing the transcription factor from the Golgi membrane. In terms of processing, phosphorylated by AMPK, leading to suppress protein processing and nuclear translocation, and repress target gene expression. Phosphorylation at Ser-402 by SIK1 represses activity possibly by inhibiting DNA-binding. SCAP-free SREBF1 is ubiquitinated by the BCR(ARMC5) complex, leading to its degradation. Post-translationally, ubiquitinated; the nuclear form has a rapid turnover and is rapidly ubiquitinated and degraded by the proteasome in the nucleus. Expressed in a wide variety of tissues, most abundant in liver and adrenal gland. In fetal tissues lung and liver shows highest expression. In terms of tissue distribution, predominates in hepatoma cell lines. Also expressed in kidney, brain, white fat, and muscle. As to expression, predominantly expressed in liver and adipose tissues. Also expressed in kidney, brain, white fat, and muscle.

It is found in the endoplasmic reticulum membrane. Its subcellular location is the golgi apparatus membrane. It localises to the cytoplasmic vesicle. The protein resides in the COPII-coated vesicle membrane. The protein localises to the nucleus. Its activity is regulated as follows. Activation by cleavage is down-regulated upon activation of SIRT3-dependent PRKAA1/AMPK-alpha signaling cascade which leads to inhibition of ATP-consuming lipogenesis to restore cellular energy balance. Functionally, precursor of the transcription factor form (Processed sterol regulatory element-binding protein 1), which is embedded in the endoplasmic reticulum membrane. Low sterol concentrations promote processing of this form, releasing the transcription factor form that translocates into the nucleus and activates transcription of genes involved in cholesterol biosynthesis and lipid homeostasis. Its function is as follows. Key transcription factor that regulates expression of genes involved in cholesterol biosynthesis and lipid homeostasis. Binds to the sterol regulatory element 1 (SRE-1) (5'-ATCACCCCAC-3'). Has dual sequence specificity binding to both an E-box motif (5'-ATCACGTGA-3') and to SRE-1 (5'-ATCACCCCAC-3'). Regulates the promoters of genes involved in cholesterol biosynthesis and the LDL receptor (LDLR) pathway of sterol regulation. In terms of biological role, isoform expressed only in select tissues, which has higher transcriptional activity compared to SREBP-1C. Able to stimulate both lipogenic and cholesterogenic gene expression. Has a role in the nutritional regulation of fatty acids and triglycerides in lipogenic organs such as the liver. Required for innate immune response in macrophages by regulating lipid metabolism. Predominant isoform expressed in most tissues, which has weaker transcriptional activity compared to isoform SREBP-1A. Primarily controls expression of lipogenic gene. Strongly activates global lipid synthesis in rapidly growing cells. Functionally, the absence of Golgi proteolytic processing requirement makes this isoform constitutively active in transactivation of lipogenic gene promoters. The chain is Sterol regulatory element-binding protein 1 from Homo sapiens (Human).